A 940-amino-acid polypeptide reads, in one-letter code: Pentatricopeptide repeat-containing protein At5g14770, mitochondrial (940 aa).

The N-terminal 24 residues, 1–24, are a transit peptide targeting the mitochondrion; sequence MIMIRIWNNYKGKYRFFLSNCRSF. 24 PPR repeats span residues 59 to 93, 94 to 129, 130 to 161, 162 to 196, 197 to 231, 241 to 259, 260 to 294, 295 to 329, 330 to 364, 365 to 399, 400 to 434, 435 to 469, 470 to 504, 505 to 539, 540 to 573, 574 to 608, 609 to 643, 644 to 678, 679 to 713, 714 to 748, 749 to 783, 784 to 818, 819 to 853, and 854 to 891; these read YVSL…GVVP, DSRL…GVSP, DVFA…VISI, DTVT…GILP, DTVS…NLIT, NLHA…GFDP, DVVT…SVYP, NHVT…GIPV, DLVV…NQVP, NVVT…SVIP, NVVT…NVVP, NGFT…GVEE, NNYI…GVTL, DQIN…GMPW, DVVS…GIEP, DIAT…GIKP, SLMS…EIHP, NLTT…GIKL, SRQV…GFIP, DTVT…GISP, NVAT…GMRP, DDFT…GLVP, KTST…GVSP, and NTST…GLLK.

Belongs to the PPR family. P subfamily.

It is found in the mitochondrion. The chain is Pentatricopeptide repeat-containing protein At5g14770, mitochondrial from Arabidopsis thaliana (Mouse-ear cress).